Consider the following 246-residue polypeptide: Adenosylcobinamide-GDP ribazoletransferase (246 aa).

A run of 7 helical transmembrane segments spans residues 30-50, 51-71, 105-125, 131-151, 167-189, 193-210, and 226-246; these read VNWYPAVGLVIGLLLWGVHQA, GLVLFSPWIAAILTLIAWVYV, VGAMGVLAAIMLLLIKAGAVA, GWGSFLIVAPVAARTHVLLSI, ISSGLSVSSIIVSYIIVFAAGWY, LQVMTAIFLSLLFALWFS, and GAVIESSEAVVLLVLVGSWWL.

The protein belongs to the CobS family. Requires Mg(2+) as cofactor.

It localises to the cell membrane. It catalyses the reaction alpha-ribazole + adenosylcob(III)inamide-GDP = adenosylcob(III)alamin + GMP + H(+). The enzyme catalyses alpha-ribazole 5'-phosphate + adenosylcob(III)inamide-GDP = adenosylcob(III)alamin 5'-phosphate + GMP + H(+). It functions in the pathway cofactor biosynthesis; adenosylcobalamin biosynthesis; adenosylcobalamin from cob(II)yrinate a,c-diamide: step 7/7. Functionally, joins adenosylcobinamide-GDP and alpha-ribazole to generate adenosylcobalamin (Ado-cobalamin). Also synthesizes adenosylcobalamin 5'-phosphate from adenosylcobinamide-GDP and alpha-ribazole 5'-phosphate. In Brevibacillus brevis (strain 47 / JCM 6285 / NBRC 100599), this protein is Adenosylcobinamide-GDP ribazoletransferase.